A 627-amino-acid chain; its full sequence is MLSKSNQPSDALLDADFSFSQPPFSTLIDSRVLVALADQKFAHPTLVQAKAIPLLLEGKDVLARARTGSGKTAAYIVPAVQKILEAKADLSPASAEYQATRAIILVPTKELALQVSSFTKNVTKYCDGLVQCVDVAAGGASIQRVLLNDKPDIVISTPTKLLSLLQSKSLSLSQLSFLAIDEADLLLSYGFKDDLTRIMDPTSGWIPKLGVQGCLMSATLSDDVEGIKGLVLRNPAILTLSEPASASSLLSQHYTHTSERDKFLLIYVLLKLKLIRGKSIIFVNDVERGYRVKLFLEQFGVKCCVVNSELPLASRYHVVEEFNRGVYDVVVATDEGAGADAEEEEDVKQEESESEGEEDEDDDKEAEDKEKEAKEEAKPAPGPSKRRATSPPSKPNKRARRADPTSSLARGIDFTSASSVINFDLPLTSTSYMHRVGRTARAGQSGLALSFVVPRENWGKDKAVSIKSAEKDEKVFERIKERVKKESDSEIKEWDWKGRKGEIEGFRYRMEDALKAVTGKRVAEARREEVRRELLNSEKLKSHFAANPLDLSYLRHDAPLHPARQQTHLKHVPNYLMPKIAALPTGGDVTDHAGVGFSRRGRGGHRGRGGRGSKSGRGKKVDPLKFK.

The Q motif signature appears at 40 to 48; sequence KFAHPTLVQ. The Helicase ATP-binding domain maps to 52–238; sequence IPLLLEGKDV…GLVLRNPAIL (187 aa). 65 to 72 contacts ATP; it reads ARTGSGKT. The DEAD box signature appears at 181–184; sequence DEAD. One can recognise a Helicase C-terminal domain in the interval 249–487; it reads LLSQHYTHTS…RIKERVKKES (239 aa). Disordered regions lie at residues 337 to 410 and 586 to 627; these read AGAD…SLAR and GGDV…LKFK. Over residues 340–365 the composition is skewed to acidic residues; sequence DAEEEEDVKQEESESEGEEDEDDDKE. The segment covering 366 to 378 has biased composition (basic and acidic residues); it reads AEDKEKEAKEEAK. The segment covering 599 to 618 has biased composition (basic residues); that stretch reads RRGRGGHRGRGGRGSKSGRG.

This sequence belongs to the DEAD box helicase family. DDX56/DBP9 subfamily.

Its subcellular location is the nucleus. The protein resides in the nucleolus. The catalysed reaction is ATP + H2O = ADP + phosphate + H(+). ATP-binding RNA helicase involved in the biogenesis of 60S ribosomal subunits and is required for the normal formation of 25S and 5.8S rRNAs. This chain is ATP-dependent RNA helicase DBP9 (DBP9), found in Cryptococcus neoformans var. neoformans serotype D (strain B-3501A) (Filobasidiella neoformans).